We begin with the raw amino-acid sequence, 667 residues long: Transcription factor 4 (667 aa).

An essential for MYOD1 inhibition region spans residues 1-83 (MHHQQRMAAL…GTPYDHMTSR (83 aa)). Positions 18-26 (DLLDFSAMF) match the 9aaTAD motif. 5 disordered regions span residues 24–245 (AMFS…LGNS), 263–321 (LSYP…SQTG), 336–379 (HTNN…EGPL), 466–570 (SLLP…MANN), and 634–667 (KRRE…MGQM). A compositionally biased stretch (polar residues) spans 29 to 49 (PVSSGKNGPTSLASGHFTGSN). Phosphoserine is present on residues Ser66, Ser87, and Ser92. 4 stretches are compositionally biased toward polar residues: residues 107-126 (GSYS…QQSL), 137-155 (GTLS…SSNN), 205-216 (KPATSTFPSSFF), and 266-306 (PSHS…TDSI). The span at 337–348 (TNNSFSSNPSTP) shows a compositional bias: low complexity. Polar residues predominate over residues 365–374 (NGGQASSSPN). Ser372 carries the phosphoserine modification. The interval 379 to 400 (LHSLQSRIEDRLERLDDAIHVL) is leucine-zipper. Low complexity-rich tracts occupy residues 467–480 (LLPN…LPVQ) and 503–512 (GQSVSSGSSE). At Ser515 the chain carries Phosphoserine. Composition is skewed to basic and acidic residues over residues 527 to 542 (KSSE…KDIK) and 555 to 570 (PEQK…MANN). The bHLH domain maps to 564-617 (ERRMANNARERLRVRDINEAFKELGRMVQLHLKSDKPQTKLLILHQAVAVILSL). The interval 619–642 (QQVRERNLNPKAACLKRREEEKVS) is class A specific domain.

Efficient DNA binding requires dimerization with another bHLH protein. Forms homo- or heterooligomers with myogenin. Interacts with HIVEP2. Interacts with NEUROD2. Interacts with AGBL1. Interacts with BHLHA9. Expressed in adult heart, brain, placenta, skeletal muscle and to a lesser extent in the lung. In developing embryonic tissues, expression mostly occurs in the brain.

The protein resides in the nucleus. Functionally, transcription factor that binds to the immunoglobulin enhancer Mu-E5/KE5-motif. Involved in the initiation of neuronal differentiation. Activates transcription by binding to the E box (5'-CANNTG-3'). Binds to the E-box present in the somatostatin receptor 2 initiator element (SSTR2-INR) to activate transcription. Preferentially binds to either 5'-ACANNTGT-3' or 5'-CCANNTGG-3'. The chain is Transcription factor 4 (TCF4) from Homo sapiens (Human).